The following is a 61-amino-acid chain: Small ribosomal subunit protein uS14B (61 aa).

Zn(2+)-binding residues include Cys-24, Cys-27, Cys-40, and Cys-43.

The protein belongs to the universal ribosomal protein uS14 family. Zinc-binding uS14 subfamily. As to quaternary structure, part of the 30S ribosomal subunit. Contacts proteins S3 and S10. Requires Zn(2+) as cofactor.

In terms of biological role, binds 16S rRNA, required for the assembly of 30S particles and may also be responsible for determining the conformation of the 16S rRNA at the A site. This chain is Small ribosomal subunit protein uS14B, found in Lactiplantibacillus plantarum (strain ATCC BAA-793 / NCIMB 8826 / WCFS1) (Lactobacillus plantarum).